Reading from the N-terminus, the 436-residue chain is 3-ketoacyl-CoA thiolase (436 aa).

The active-site Acyl-thioester intermediate is the cysteine 99. Residues histidine 392 and cysteine 422 each act as proton acceptor in the active site.

The protein belongs to the thiolase-like superfamily. Thiolase family. In terms of assembly, heterotetramer of two alpha chains (FadJ) and two beta chains (FadI).

The protein localises to the cytoplasm. It carries out the reaction an acyl-CoA + acetyl-CoA = a 3-oxoacyl-CoA + CoA. The protein operates within lipid metabolism; fatty acid beta-oxidation. Functionally, catalyzes the final step of fatty acid oxidation in which acetyl-CoA is released and the CoA ester of a fatty acid two carbons shorter is formed. This Aeromonas salmonicida (strain A449) protein is 3-ketoacyl-CoA thiolase.